The following is a 410-amino-acid chain: Arginine deiminase (410 aa).

The active-site Amidino-cysteine intermediate is C400.

It belongs to the arginine deiminase family.

The protein localises to the cytoplasm. The catalysed reaction is L-arginine + H2O = L-citrulline + NH4(+). The protein operates within amino-acid degradation; L-arginine degradation via ADI pathway; carbamoyl phosphate from L-arginine: step 1/2. This is Arginine deiminase (arcA) from Lactococcus lactis subsp. lactis (strain IL1403) (Streptococcus lactis).